The following is a 430-amino-acid chain: Argininosuccinate lyase (430 aa).

It belongs to the lyase 1 family. Argininosuccinate lyase subfamily.

Its subcellular location is the cytoplasm. The enzyme catalyses 2-(N(omega)-L-arginino)succinate = fumarate + L-arginine. It participates in amino-acid biosynthesis; L-arginine biosynthesis; L-arginine from L-ornithine and carbamoyl phosphate: step 3/3. The protein is Argininosuccinate lyase of Sorangium cellulosum (strain So ce56) (Polyangium cellulosum (strain So ce56)).